Here is a 549-residue protein sequence, read N- to C-terminus: Longitudinals lacking protein, isoforms H/M/V (549 aa).

The BTB domain occupies 32 to 97 (VDCTLAAEGK…MYRGEVNISQ (66 aa)). 2 disordered regions span residues 115 to 200 (LSDN…SSVL) and 228 to 340 (SSGP…ASAS). 4 stretches are compositionally biased toward low complexity: residues 162 to 175 (SGDV…SSSP), 228 to 251 (SSGP…LTST), 263 to 293 (TSST…QTTS), and 329 to 340 (NSATGPNPASAS).

In terms of tissue distribution, mostly neuronal.

Its subcellular location is the nucleus. In terms of biological role, putative transcription factor required for axon growth and guidance in the central and peripheral nervous systems. Repels CNS axons away from the midline by promoting the expression of the midline repellent sli and its receptor robo. The sequence is that of Longitudinals lacking protein, isoforms H/M/V from Drosophila melanogaster (Fruit fly).